A 1077-amino-acid polypeptide reads, in one-letter code: Endo-1,4-beta-xylanase Y (1077 aa).

An N-terminal signal peptide occupies residues M1–N26. In terms of domain architecture, CBM-cenC 1 spans D33 to K180. The GH10 domain occupies Y189–I538. The Proton donor role is filled by E337. E460 (nucleophile) is an active-site residue. The disordered stretch occupies residues E543–D563. A CBM-cenC 2 domain is found at N565–A714. In terms of domain architecture, Dockerin spans P728 to V796.

Belongs to the glycosyl hydrolase 10 (cellulase F) family.

It carries out the reaction Endohydrolysis of (1-&gt;4)-beta-D-xylosidic linkages in xylans.. The chain is Endo-1,4-beta-xylanase Y (xynY) from Acetivibrio thermocellus (Hungateiclostridium thermocellum).